A 263-amino-acid chain; its full sequence is EMVDYYVGIGANGLEMDVSFDSNGKAEYTYHGVPCDCFRSCTRSEKFSVYLDYVRQITTPGNPKFRENLIFLIMDLKLNDLEPHALYNAGIDIADQLSKNYWKDDGKARAHFLISIPYVSQTAFVDGFRWWFEKKGLEKYYEKIGWDFSANEDLNSIQATYQKLNITGHTWQSDGITNCLTRGTERLTQAIQKRDTPGNSYLNKVYAWSLDKYGSIKQALDLGVDGVMSNYPQRMVEILSEGTYLERFRLATYEDNPWETFKQ.

Residues E15 and D17 each contribute to the Mg(2+) site. H31 (nucleophile) is an active-site residue. Cystine bridges form between C35–C41 and C37–C179. D75 serves as a coordination point for Mg(2+).

It belongs to the arthropod phospholipase D family. Class II subfamily. Mg(2+) serves as cofactor. As to expression, expressed by the venom gland.

It is found in the secreted. It carries out the reaction an N-(acyl)-sphingosylphosphocholine = an N-(acyl)-sphingosyl-1,3-cyclic phosphate + choline. The enzyme catalyses an N-(acyl)-sphingosylphosphoethanolamine = an N-(acyl)-sphingosyl-1,3-cyclic phosphate + ethanolamine. It catalyses the reaction a 1-acyl-sn-glycero-3-phosphocholine = a 1-acyl-sn-glycero-2,3-cyclic phosphate + choline. The catalysed reaction is a 1-acyl-sn-glycero-3-phosphoethanolamine = a 1-acyl-sn-glycero-2,3-cyclic phosphate + ethanolamine. Its function is as follows. Dermonecrotic toxins cleave the phosphodiester linkage between the phosphate and headgroup of certain phospholipids (sphingolipid and lysolipid substrates), forming an alcohol (often choline) and a cyclic phosphate. This toxin acts on sphingomyelin (SM). It may also act on ceramide phosphoethanolamine (CPE), lysophosphatidylcholine (LPC) and lysophosphatidylethanolamine (LPE), but not on lysophosphatidylserine (LPS), and lysophosphatidylglycerol (LPG). It acts by transphosphatidylation, releasing exclusively cyclic phosphate products as second products. Induces dermonecrosis, hemolysis, increased vascular permeability, edema, inflammatory response, and platelet aggregation. In Sicarius patagonicus (Six-eyed sand spider), this protein is Dermonecrotic toxin SpaSicTox-betaIF1.